A 255-amino-acid polypeptide reads, in one-letter code: DNA repair protein RecO (255 aa).

It belongs to the RecO family.

In terms of biological role, involved in DNA repair and RecF pathway recombination. The sequence is that of DNA repair protein RecO from Listeria welshimeri serovar 6b (strain ATCC 35897 / DSM 20650 / CCUG 15529 / CIP 8149 / NCTC 11857 / SLCC 5334 / V8).